A 721-amino-acid chain; its full sequence is Procollagen-lysine,2-oxoglutarate 5-dioxygenase (721 aa).

Residues 1 to 21 form the signal peptide; that stretch reads MRIQQSALLLLLLAVTSQGDA. N504, N530, and N536 each carry an N-linked (GlcNAc...) asparagine glycan. The region spanning 627–721 is the Fe2OG dioxygenase domain; it reads NPPRALMNFM…RYIMISFIDP (95 aa). Fe cation-binding residues include H650 and D652. N680 is a glycosylation site (N-linked (GlcNAc...) asparagine). H702 provides a ligand contact to Fe cation. An N-linked (GlcNAc...) asparagine glycan is attached at N709. Residue R712 participates in 2-oxoglutarate binding.

The cofactor is L-ascorbate. Requires Fe(2+) as cofactor.

It localises to the endoplasmic reticulum. The protein localises to the secreted. It is found in the extracellular space. It carries out the reaction L-lysyl-[collagen] + 2-oxoglutarate + O2 = (5R)-5-hydroxy-L-lysyl-[collagen] + succinate + CO2. In terms of biological role, forms hydroxylysine residues in collagen type IV. Required for the secretion of collagen type IV (vkg) from haemocytes, fat body and follicle cells. The protein is Procollagen-lysine,2-oxoglutarate 5-dioxygenase of Drosophila melanogaster (Fruit fly).